We begin with the raw amino-acid sequence, 361 residues long: Alternative oxidase, mitochondrial (361 aa).

A helical membrane pass occupies residues 156 to 178; sequence YLVRNVFLESVAGVPGMVAGMLR. Fe cation-binding residues include E164, E203, and H206. Residues 218 to 240 form a helical membrane-spanning segment; that stretch reads WFMRLAVLGAQGVFFNAMFLSYL. Residues E254, E309, and H312 each contribute to the Fe cation site. The segment covering 318–328 has biased composition (polar residues); that stretch reads TLGNLDQNSDP. The interval 318 to 361 is disordered; that stretch reads TLGNLDQNSDPNPYASKYDNPNVPHPRKDIKYLKPSGWEREEVM. The span at 343–361 shows a compositional bias: basic and acidic residues; that stretch reads PRKDIKYLKPSGWEREEVM.

It belongs to the alternative oxidase family. Fe cation is required as a cofactor.

Its subcellular location is the mitochondrion inner membrane. Its function is as follows. Catalyzes cyanide-resistant oxygen consumption. May increase respiration when the cytochrome respiratory pathway is restricted, or in response to low temperatures. This chain is Alternative oxidase, mitochondrial (AOX1), found in Venturia inaequalis (Apple scab fungus).